The following is a 252-amino-acid chain: MTEPIISINDLSVYFNKKKAINNVTMDFYPNEITALIGPSGSGKSTLLRSINRMGDLNPECTVTGAVSYNGHNVYSPRTDTVELRKEIGMVFQQPNPFPMSIYENVVYGLRINGIKDKAVLDKAVEESLKGASVWEEVKDRLHDSALGLSGGQQQRVCVARVLATSPKVILLDEPTSALDPISAGKIEETLYNLKDQYTLLLVTRSMQQASRISQRTAFFLDGELIEYSSTKDMFLNPQHKETEDYITGKLG.

Residues 6-247 (ISINDLSVYF…PQHKETEDYI (242 aa)) enclose the ABC transporter domain. Residue 38 to 45 (GPSGSGKS) coordinates ATP.

Belongs to the ABC transporter superfamily. Phosphate importer (TC 3.A.1.7) family. The complex is composed of two ATP-binding proteins (PstB), two transmembrane proteins (PstC and PstA) and a solute-binding protein (PstS).

The protein localises to the cell membrane. The enzyme catalyses phosphate(out) + ATP + H2O = ADP + 2 phosphate(in) + H(+). Part of the ABC transporter complex PstSACB involved in phosphate import. Responsible for energy coupling to the transport system. The protein is Phosphate import ATP-binding protein PstB 2 of Streptococcus thermophilus (strain CNRZ 1066).